A 148-amino-acid chain; its full sequence is Large ribosomal subunit protein bL9 (148 aa).

This sequence belongs to the bacterial ribosomal protein bL9 family.

Binds to the 23S rRNA. The sequence is that of Large ribosomal subunit protein bL9 from Geobacter sulfurreducens (strain ATCC 51573 / DSM 12127 / PCA).